A 413-amino-acid chain; its full sequence is MGFRIGKNLLFNLRKAPGSRVKARKTMVSVTMATSEWIQFFKEAGIPPGPAVNYAVMFVDNRIQKSMLLDLNKEIMNELGVTVVGDIIAILKHAKVVHRQDMCKAATESVPCNPSPLQGELRRGASSAASRMIANSLNHDSPPHTPTRRSDNSTSKISVTVSNKMAAKSAKAAALAHREEESLVVPTKRRRVTAEMEGKYIIHMPKGTTPRTRKILEQQQAAKGLHRTSVFDRLGAESKADTTTGTKPTGVFSRLGATPEMDEDLAWDSDNDSSSSSVLQYAGVLKKLGRGPTKASAQPALTVKAKAASSATSTATTPKLRRLALPSRPGLQKKPDSLPKVSILQRLGKAAVVSEAQDSQVTSTKSKSSAEVKFAIKRTLVGPRGSSSSESLGAQMDHAGTVSVFKRLGQRTF.

Disordered regions lie at residues 108–158 and 232–257; these read ESVP…SKIS and DRLG…RLGA. Ser115 is subject to Phosphoserine. Over residues 127 to 139 the composition is skewed to polar residues; it reads SAASRMIANSLNH. Phosphoserine is present on Ser141. A Glycyl lysine isopeptide (Lys-Gly) (interchain with G-Cter in SUMO2) cross-link involves residue Lys239. Residues Ser269 and Ser296 each carry the phosphoserine modification. Positions 290 to 336 are disordered; that stretch reads RGPTKASAQPALTVKAKAASSATSTATTPKLRRLALPSRPGLQKKPD. The segment covering 302–318 has biased composition (low complexity); sequence TVKAKAASSATSTATTP. Residue Ser342 is modified to Phosphoserine.

This is an uncharacterized protein from Mus musculus (Mouse).